The chain runs to 512 residues: Probable cytochrome P450 6d2 (512 aa).

C457 contacts heme.

This sequence belongs to the cytochrome P450 family. It depends on heme as a cofactor.

The protein resides in the endoplasmic reticulum membrane. It localises to the microsome membrane. Functionally, may be involved in the metabolism of insect hormones and in the breakdown of synthetic insecticides. In Drosophila melanogaster (Fruit fly), this protein is Probable cytochrome P450 6d2 (Cyp6d2).